We begin with the raw amino-acid sequence, 150 residues long: SsrA-binding protein (150 aa).

This sequence belongs to the SmpB family.

The protein resides in the cytoplasm. Its function is as follows. Required for rescue of stalled ribosomes mediated by trans-translation. Binds to transfer-messenger RNA (tmRNA), required for stable association of tmRNA with ribosomes. tmRNA and SmpB together mimic tRNA shape, replacing the anticodon stem-loop with SmpB. tmRNA is encoded by the ssrA gene; the 2 termini fold to resemble tRNA(Ala) and it encodes a 'tag peptide', a short internal open reading frame. During trans-translation Ala-aminoacylated tmRNA acts like a tRNA, entering the A-site of stalled ribosomes, displacing the stalled mRNA. The ribosome then switches to translate the ORF on the tmRNA; the nascent peptide is terminated with the 'tag peptide' encoded by the tmRNA and targeted for degradation. The ribosome is freed to recommence translation, which seems to be the essential function of trans-translation. This Campylobacter jejuni subsp. doylei (strain ATCC BAA-1458 / RM4099 / 269.97) protein is SsrA-binding protein.